The sequence spans 605 residues: Glucose oxidase (605 aa).

Residues 1–16 (MQTLLVSSLVVSLAAA) form the signal peptide. Residues Leu51 and Thr52 each coordinate FAD. An N-linked (GlcNAc...) asparagine glycan is attached at Asn65. Position 72 (Glu72) interacts with FAD. Residue Asn111 is glycosylated (N-linked (GlcNAc...) asparagine). FAD is bound by residues Ser125, Asn129, Gly130, and Thr132. N-linked (GlcNAc...) asparagine glycans are attached at residues Asn183 and Asn190. An intrachain disulfide couples Cys186 to Cys228. Val272 contributes to the FAD binding site. N-linked (GlcNAc...) asparagine glycosylation is found at Asn280, Asn377, Asn410, and Asn495. Residue His538 is the Proton acceptor of the active site. O2 contacts are provided by Arg559 and Val560. Gly571 and Met583 together coordinate FAD.

Belongs to the GMC oxidoreductase family. Homodimer. It depends on FAD as a cofactor. Post-translationally, the N-linked sugar chains of the glucose oxidase contributed to the high solubility of the enzyme in water.

The protein localises to the secreted. It is found in the cell wall. The protein resides in the cytoplasm. It localises to the extracellular space. Its subcellular location is the extracellular matrix. It catalyses the reaction beta-D-glucose + O2 = D-glucono-1,5-lactone + H2O2. Its function is as follows. Glucose oxidase catalyzes the oxidation of beta-D-glucose to D-glucono-delta-lactone and hydrogen peroxide in the presence of molecular oxygen. D-glucono-delta-lactone is sequentially hydrolyzed by lactonase to D-gluconic acid, and the resulting hydrogen peroxide is hydrolyzed by catalase to oxygen and water. The activity shows high specificity to beta-D-glucose, with very low to no activity towards L-glucose, 2-deoxy-D-glucose, 3-deoxy-D-glucose, 4-deoxy-D-glucose, 5-deoxy-D-glucose, 6-deoxy-D-glucose, 3-O-methyl-D-glucose, 4-O-methyl-D-glucose, 6-O-methyl-D-glucose, 4,6-O-benzylidene-D-glucose, 5-thio-5-deoxy-D-glucose, D-mannose, D-allose, D-galactose, D-fructose, D-arabinose, D-xylose, trehalose, melibiose, L-mannomethylose, lactose, sucrose or 1,5-anhydro-D-glucitol. This is Glucose oxidase from Aspergillus niger.